The sequence spans 286 residues: MKIRVPATSANLGPGFDSMGIAVSKYLEVDILEERDQWFIEHDLGDIPNDDSNLLIQTALRLAPNIPAHRLKMTSDIPLARGLGSSSSVIVAGIELANQLGHLNLTDDRKLAIATRIEGHPDNVAPAIFGQLVIASQIGKDVDYIIAPFPDLSLVCFIPDYELKTSDSRDVLPKQLSYKQAVAASSVANLAIAALLTGNLKKAGRAIENDQFHEIYRQRLVREFQPIKRAAAANGAYATYLSGAGPAIMVMCPNKKKMAIYEAIEQLGLIGQLVSLELDRQGLCLV.

78–88 is a binding site for ATP; sequence PLARGLGSSSS.

The protein belongs to the GHMP kinase family. Homoserine kinase subfamily.

It localises to the cytoplasm. The catalysed reaction is L-homoserine + ATP = O-phospho-L-homoserine + ADP + H(+). The protein operates within amino-acid biosynthesis; L-threonine biosynthesis; L-threonine from L-aspartate: step 4/5. Functionally, catalyzes the ATP-dependent phosphorylation of L-homoserine to L-homoserine phosphate. The chain is Homoserine kinase from Streptococcus equi subsp. equi (strain 4047).